The primary structure comprises 231 residues: Probable septum site-determining protein MinC (231 aa).

Belongs to the MinC family. In terms of assembly, interacts with MinD and FtsZ.

Its function is as follows. Cell division inhibitor that blocks the formation of polar Z ring septums. Rapidly oscillates between the poles of the cell to destabilize FtsZ filaments that have formed before they mature into polar Z rings. Prevents FtsZ polymerization. The chain is Probable septum site-determining protein MinC from Bradyrhizobium diazoefficiens (strain JCM 10833 / BCRC 13528 / IAM 13628 / NBRC 14792 / USDA 110).